Reading from the N-terminus, the 428-residue chain is UPF0761 membrane protein TERTU_3006 (428 aa).

Transmembrane regions (helical) follow at residues 47 to 67 (LFALVPLMTVTYTMFSAIPAF), 104 to 124 (LSGVGVVMLLVTAYLMLRNIE), 143 to 163 (YLLYWAILSVGPILVAAAFLL), 189 to 209 (VVPWALTSAAFTLLFVAVPNC), 218 to 238 (IGGVITAFAFEVVKAVFGYIV), 248 to 268 (GAFAVVPLFLLWVNLLWTIIL), and 292 to 312 (MIVVLICLALFREKAALGESV).

Belongs to the UPF0761 family.

It is found in the cell inner membrane. This is UPF0761 membrane protein TERTU_3006 from Teredinibacter turnerae (strain ATCC 39867 / T7901).